The primary structure comprises 254 residues: Cell division protein FtsQ (254 aa).

Topologically, residues 1 to 27 are cytoplasmic; that stretch reads MNILKRKTPQNIRFGEQKPKYYFHIRA. A helical transmembrane segment spans residues 28-48; the sequence is FAVLLGVFFLLGVYFNWQSIL. Residues 49–254 lie on the Periplasmic side of the membrane; the sequence is EKMDDKPISA…AGAAVGMVDR (206 aa). Residues 54–124 form the POTRA domain; sequence KPISAFALVG…NRLSIWVSEY (71 aa).

Belongs to the FtsQ/DivIB family. FtsQ subfamily. Part of a complex composed of FtsB, FtsL and FtsQ.

It localises to the cell inner membrane. Essential cell division protein. May link together the upstream cell division proteins, which are predominantly cytoplasmic, with the downstream cell division proteins, which are predominantly periplasmic. May control correct divisome assembly. This is Cell division protein FtsQ from Haemophilus influenzae (strain ATCC 51907 / DSM 11121 / KW20 / Rd).